Here is a 380-residue protein sequence, read N- to C-terminus: TPR repeat-containing thioredoxin TDX (380 aa).

N-acetylvaline is present on Val-2. Positions 49-59 (TERDYEDKAET) are enriched in basic and acidic residues. The segment at 49–115 (TERDYEDKAE…DENRDDAQSE (67 aa)) is disordered. Acidic residues predominate over residues 69-91 (DDDDDIMESDVELDNSDVVEPDN). The segment covering 106–115 (DENRDDAQSE) has biased composition (basic and acidic residues). TPR repeat units lie at residues 112-145 (AQSE…NPTS), 147-179 (ILYA…NSDS), and 181-213 (KGYK…DYDE). The segment covering 240 to 263 (RKEKELQRAERERRKQQEAQEREA) has biased composition (basic and acidic residues). A disordered region spans residues 240-265 (RKEKELQRAERERRKQQEAQEREAQA). The Thioredoxin domain maps to 252 to 378 (RRKQQEAQER…LEQKIAQHSS (127 aa)). Active-site nucleophile residues include Cys-304 and Cys-307. The cysteines at positions 304 and 307 are disulfide-linked.

Belongs to the thioredoxin family. In terms of assembly, oligomerization under high temperature.

Its function is as follows. Thiol-disulfide oxidoreductase that possesses insulin disulfide bonds reducing activity, disulfide reductase, foldase chaperone and holdase chaperone activities. Heat shock causes oligomerization and formation of high molecular weiht (HMW) complexes with concomitant functional switching from a disulfide reductase and foldase chaperone to a holdase chaperone. May interact with HSP70 proteins through the TPR repeats. This chain is TPR repeat-containing thioredoxin TDX (TDX), found in Arabidopsis thaliana (Mouse-ear cress).